The following is a 577-amino-acid chain: Arginine--tRNA ligase (577 aa).

The 'HIGH' region signature appears at 122 to 132; that stretch reads PNVAKEMHVGH.

This sequence belongs to the class-I aminoacyl-tRNA synthetase family. In terms of assembly, monomer.

It is found in the cytoplasm. It carries out the reaction tRNA(Arg) + L-arginine + ATP = L-arginyl-tRNA(Arg) + AMP + diphosphate. In Histophilus somni (strain 129Pt) (Haemophilus somnus), this protein is Arginine--tRNA ligase.